Reading from the N-terminus, the 648-residue chain is Bifunctional protein TilS/HprT (648 aa).

29–34 (SGGPDS) contributes to the ATP binding site. Residue D627 participates in Mg(2+) binding.

It in the N-terminal section; belongs to the tRNA(Ile)-lysidine synthase family. This sequence in the C-terminal section; belongs to the purine/pyrimidine phosphoribosyltransferase family. Mg(2+) serves as cofactor.

Its subcellular location is the cytoplasm. It catalyses the reaction IMP + diphosphate = hypoxanthine + 5-phospho-alpha-D-ribose 1-diphosphate. The catalysed reaction is GMP + diphosphate = guanine + 5-phospho-alpha-D-ribose 1-diphosphate. The enzyme catalyses cytidine(34) in tRNA(Ile2) + L-lysine + ATP = lysidine(34) in tRNA(Ile2) + AMP + diphosphate + H(+). Functionally, ligates lysine onto the cytidine present at position 34 of the AUA codon-specific tRNA(Ile) that contains the anticodon CAU, in an ATP-dependent manner. Cytidine is converted to lysidine, thus changing the amino acid specificity of the tRNA from methionine to isoleucine. The polypeptide is Bifunctional protein TilS/HprT (tilS/hprT) (Listeria monocytogenes serotype 4b (strain F2365)).